The chain runs to 211 residues: Protein-L-isoaspartate O-methyltransferase (211 aa).

S62 is a catalytic residue.

The protein belongs to the methyltransferase superfamily. L-isoaspartyl/D-aspartyl protein methyltransferase family.

The protein localises to the cytoplasm. It catalyses the reaction [protein]-L-isoaspartate + S-adenosyl-L-methionine = [protein]-L-isoaspartate alpha-methyl ester + S-adenosyl-L-homocysteine. Functionally, catalyzes the methyl esterification of L-isoaspartyl residues in peptides and proteins that result from spontaneous decomposition of normal L-aspartyl and L-asparaginyl residues. It plays a role in the repair and/or degradation of damaged proteins. The chain is Protein-L-isoaspartate O-methyltransferase from Shewanella baltica (strain OS223).